The chain runs to 309 residues: uncharacterized protein (309 aa).

A Radical SAM core domain is found at 17-254 (RYGQKVHKLT…AGEMIRHTPP (238 aa)). The [4Fe-4S] cluster site is built by C33, C45, and C48.

Belongs to the radical SAM superfamily. [4Fe-4S] cluster is required as a cofactor.

This is an uncharacterized protein from Escherichia coli O157:H7.